A 105-amino-acid chain; its full sequence is Small ribosomal subunit protein uS10 (105 aa).

Belongs to the universal ribosomal protein uS10 family. In terms of assembly, part of the 30S ribosomal subunit.

Its function is as follows. Involved in the binding of tRNA to the ribosomes. The chain is Small ribosomal subunit protein uS10 from Synechococcus sp. (strain JA-2-3B'a(2-13)) (Cyanobacteria bacterium Yellowstone B-Prime).